A 199-amino-acid polypeptide reads, in one-letter code: Chaperone protein TorD (199 aa).

It belongs to the TorD/DmsD family. TorD subfamily.

It localises to the cytoplasm. In terms of biological role, involved in the biogenesis of TorA. Acts on TorA before the insertion of the molybdenum cofactor and, as a result, probably favors a conformation of the apoenzyme that is competent for acquiring the cofactor. In Escherichia coli (strain ATCC 8739 / DSM 1576 / NBRC 3972 / NCIMB 8545 / WDCM 00012 / Crooks), this protein is Chaperone protein TorD.